The chain runs to 550 residues: Probable acyl-activating enzyme 6 (550 aa).

Belongs to the ATP-dependent AMP-binding enzyme family. In terms of tissue distribution, expressed at low levels in roots, leaves, stems and developing seeds.

In terms of biological role, may act as an acid--thiol ligase that activates carboxylic acids by forming acyl-CoAs. The polypeptide is Probable acyl-activating enzyme 6 (AAE6) (Arabidopsis thaliana (Mouse-ear cress)).